We begin with the raw amino-acid sequence, 352 residues long: Probable dual-specificity RNA methyltransferase RlmN (352 aa).

The active-site Proton acceptor is glutamate 93. One can recognise a Radical SAM core domain in the interval 99–333 (FNYGYSVCVT…IRLERGSSID (235 aa)). A disulfide bridge links cysteine 106 with cysteine 336. Cysteine 113, cysteine 117, and cysteine 120 together coordinate [4Fe-4S] cluster. S-adenosyl-L-methionine is bound by residues 164–165 (GE), serine 196, and asparagine 295. Cysteine 336 acts as the S-methylcysteine intermediate in catalysis.

The protein belongs to the radical SAM superfamily. RlmN family. [4Fe-4S] cluster is required as a cofactor.

The protein resides in the cytoplasm. It catalyses the reaction adenosine(2503) in 23S rRNA + 2 reduced [2Fe-2S]-[ferredoxin] + 2 S-adenosyl-L-methionine = 2-methyladenosine(2503) in 23S rRNA + 5'-deoxyadenosine + L-methionine + 2 oxidized [2Fe-2S]-[ferredoxin] + S-adenosyl-L-homocysteine. The enzyme catalyses adenosine(37) in tRNA + 2 reduced [2Fe-2S]-[ferredoxin] + 2 S-adenosyl-L-methionine = 2-methyladenosine(37) in tRNA + 5'-deoxyadenosine + L-methionine + 2 oxidized [2Fe-2S]-[ferredoxin] + S-adenosyl-L-homocysteine. Functionally, specifically methylates position 2 of adenine 2503 in 23S rRNA and position 2 of adenine 37 in tRNAs. The protein is Probable dual-specificity RNA methyltransferase RlmN of Malacoplasma penetrans (strain HF-2) (Mycoplasma penetrans).